Reading from the N-terminus, the 405-residue chain is L-rhamnonate dehydratase (405 aa).

Positions 33 and 59 each coordinate substrate. Mg(2+) is bound by residues aspartate 226, glutamate 252, and glutamate 280. The active-site Proton acceptor is the histidine 329. Glutamate 349 provides a ligand contact to substrate.

This sequence belongs to the mandelate racemase/muconate lactonizing enzyme family. RhamD subfamily. As to quaternary structure, homooctamer; tetramer of dimers. Requires Mg(2+) as cofactor.

It catalyses the reaction L-rhamnonate = 2-dehydro-3-deoxy-L-rhamnonate + H2O. Functionally, catalyzes the dehydration of L-rhamnonate to 2-keto-3-deoxy-L-rhamnonate (KDR). The polypeptide is L-rhamnonate dehydratase (Shigella boydii serotype 4 (strain Sb227)).